A 342-amino-acid polypeptide reads, in one-letter code: Dihydroorotase (342 aa).

2 residues coordinate Zn(2+): histidine 13 and histidine 15. Substrate contacts are provided by residues histidine 15–arginine 17 and asparagine 41. 3 residues coordinate Zn(2+): lysine 98, histidine 135, and histidine 173. Lysine 98 is modified (N6-carboxylysine). Position 135 (histidine 135) interacts with substrate. Leucine 218 is a binding site for substrate. Residue aspartate 246 coordinates Zn(2+). Aspartate 246 is a catalytic residue. Histidine 250 and alanine 262 together coordinate substrate.

The protein belongs to the metallo-dependent hydrolases superfamily. DHOase family. Class II DHOase subfamily. Homodimer. Zn(2+) is required as a cofactor.

It catalyses the reaction (S)-dihydroorotate + H2O = N-carbamoyl-L-aspartate + H(+). The protein operates within pyrimidine metabolism; UMP biosynthesis via de novo pathway; (S)-dihydroorotate from bicarbonate: step 3/3. Catalyzes the reversible cyclization of carbamoyl aspartate to dihydroorotate. The sequence is that of Dihydroorotase from Vibrio cholerae serotype O1 (strain ATCC 39315 / El Tor Inaba N16961).